The sequence spans 129 residues: Histone H2A (129 aa).

The protein belongs to the histone H2A family. As to quaternary structure, the nucleosome is a histone octamer containing two molecules each of H2A, H2B, H3 and H4 assembled in one H3-H4 heterotetramer and two H2A-H2B heterodimers. The octamer wraps approximately 147 bp of DNA.

The protein localises to the nucleus. The protein resides in the chromosome. In terms of biological role, core component of nucleosome. Nucleosomes wrap and compact DNA into chromatin, limiting DNA accessibility to the cellular machineries which require DNA as a template. Histones thereby play a central role in transcription regulation, DNA repair, DNA replication and chromosomal stability. DNA accessibility is regulated via a complex set of post-translational modifications of histones, also called histone code, and nucleosome remodeling. This is Histone H2A (H2A-II) from Chlamydomonas reinhardtii (Chlamydomonas smithii).